Consider the following 160-residue polypeptide: Cytochrome b6-f complex subunit 4 (160 aa).

The next 3 helical transmembrane spans lie at 36-56, 95-115, and 131-151; these read LLYIFPVVILGTFACVIGLSV, LLGVLLMAAVPAGLITVPFIE, and TLFLVGTLVAVWLGIGATLPI.

It belongs to the cytochrome b family. PetD subfamily. The 4 large subunits of the cytochrome b6-f complex are cytochrome b6, subunit IV (17 kDa polypeptide, petD), cytochrome f and the Rieske protein, while the 4 small subunits are petG, petL, petM and petN. The complex functions as a dimer.

It localises to the plastid. Its subcellular location is the chloroplast thylakoid membrane. Functionally, component of the cytochrome b6-f complex, which mediates electron transfer between photosystem II (PSII) and photosystem I (PSI), cyclic electron flow around PSI, and state transitions. This is Cytochrome b6-f complex subunit 4 from Tetradesmus obliquus (Green alga).